The following is a 269-amino-acid chain: Trans-aconitate 2-methyltransferase (269 aa).

Belongs to the methyltransferase superfamily. Tam family.

The protein resides in the cytoplasm. The catalysed reaction is trans-aconitate + S-adenosyl-L-methionine = (E)-3-(methoxycarbonyl)pent-2-enedioate + S-adenosyl-L-homocysteine. In terms of biological role, catalyzes the S-adenosylmethionine monomethyl esterification of trans-aconitate. This Streptomyces avermitilis (strain ATCC 31267 / DSM 46492 / JCM 5070 / NBRC 14893 / NCIMB 12804 / NRRL 8165 / MA-4680) protein is Trans-aconitate 2-methyltransferase.